A 1895-amino-acid polypeptide reads, in one-letter code: 1,3-beta-glucan synthase component GSC2 (1895 aa).

Composition is skewed to polar residues over residues 1-16 (MSYN…YSNG) and 25-34 (PTYQVTQDQS). 2 disordered regions span residues 1–143 (MSYN…PYGN) and 269–292 (ARKA…EETL). The Extracellular portion of the chain corresponds to 1–473 (MSYNDPNLNG…WLHLVTNFNR (473 aa)). Positions 65–78 (QFPQGQDPSQDQGP) are enriched in low complexity. 2 stretches are compositionally biased toward polar residues: residues 79-107 (YNND…SDFS) and 115-141 (TYPN…STPY). Basic residues predominate over residues 269-278 (ARKAKKKNKK). Residue Lys-278 forms a Glycyl lysine isopeptide (Lys-Gly) (interchain with G-Cter in ubiquitin) linkage. Phosphothreonine occurs at positions 288 and 291. Lys-405 participates in a covalent cross-link: Glycyl lysine isopeptide (Lys-Gly) (interchain with G-Cter in ubiquitin). Residues 474 to 494 (IWIMHISVYWMYCAYNAPTFY) form a helical membrane-spanning segment. Residues 495–511 (THNYQQLVDNQPLAAYK) lie on the Cytoplasmic side of the membrane. A helical transmembrane segment spans residues 512-532 (WATAALGGTVASLIQVAATLC). Topologically, residues 533-550 (EWSFVPRKWAGAQHLSRR) are extracellular. A helical membrane pass occupies residues 551–571 (FWFLCVIMGINLGPVIFVFAY). The Cytoplasmic portion of the chain corresponds to 572–582 (DKDTVYSTAAH). Residues 583–603 (VVGAVMFFVAVATLVFFSVMP) form a helical membrane-spanning segment. Residues 604-1579 (LGGLFTSYMK…DASRAHRTNL (976 aa)) lie on the Extracellular side of the membrane. Glycyl lysine isopeptide (Lys-Gly) (interchain with G-Cter in ubiquitin) cross-links involve residues Lys-929, Lys-934, Lys-1558, and Lys-1566. Residues 1580-1600 (IMAEIIPCAIYAAGCFIAFTF) traverse the membrane as a helical segment. Over 1601 to 1620 (INAQTGVKTTDEDRVNSTLR) the chain is Cytoplasmic. Residues 1621-1641 (IIICTLAPIVIDIGVLFFCMG) traverse the membrane as a helical segment. Topologically, residues 1642-1758 (LSCCSGPLLG…LTAKVIELSE (117 aa)) are extracellular. A helical membrane pass occupies residues 1759 to 1779 (FAADFVLGHVILIFQLPVICI). Over 1780 to 1821 (PKIDKFHSIMLFWLKPSRQIRPPIYSLKQARLRKRMVRRYCS) the chain is Cytoplasmic. A helical transmembrane segment spans residues 1822-1842 (LYFLVLIIFAGCIVGPAVASA). Over 1843–1895 (HVPKDLGSGLTGTFHNLVQPRNVSNNDTGSQMSTYKSHYYTHTPSLKTWSTIK) the chain is Extracellular.

Belongs to the glycosyltransferase 48 family. Component of the 1,3-beta-glucan synthase (GS) complex, composed of two alternate catalytic subunits FKS1 or GSC2, and a regulatory subunit RHO1. Interacts with SMK1.

The protein localises to the membrane. It carries out the reaction [(1-&gt;3)-beta-D-glucosyl](n) + UDP-alpha-D-glucose = [(1-&gt;3)-beta-D-glucosyl](n+1) + UDP + H(+). Functionally, alternate catalytic subunit of the 1,3-beta-glucan synthase (GS) complex. Synthesizes 1,3-beta-glucan, a major structural component of the yeast cell wall. Required for spore wall assembly. Negative regulation of activity by SMK1 is important for spore wall deposition. Activity is positively regulated by RHO1. The polypeptide is 1,3-beta-glucan synthase component GSC2 (Saccharomyces cerevisiae (strain ATCC 204508 / S288c) (Baker's yeast)).